Here is a 410-residue protein sequence, read N- to C-terminus: Zinc transporter ttm-1 (410 aa).

2 stretches are compositionally biased toward low complexity: residues 1 to 13 and 35 to 46; these read MTISMISPSSIRL and SVSSSDSGVSAD. Residues 1-94 form a disordered region; that stretch reads MTISMISPSS…GAHKHSHDEK (94 aa). Over 1 to 103 the chain is Cytoplasmic; the sequence is MTISMISPSS…KYQKGRRAEK (103 aa). Basic residues predominate over residues 50-69; the sequence is HHHHGHGHGHSHGGHGHSHT. Residues 104 to 124 traverse the membrane as a helical segment; that stretch reads VLWAVAALSAVFIAAEFVGGF. Residues 125–129 lie on the Extracellular side of the membrane; the sequence is WAQSL. The helical transmembrane segment at 130-150 threads the bilayer; it reads AIMTDAGHMLSDLLSFIISIF. The Cytoplasmic segment spans residues 151 to 171; the sequence is AIRCARLPASKRLSFGYERAE. Residues 172-192 traverse the membrane as a helical segment; that stretch reads VLGALTSVIILWVLTTVLVVV. Residues 193–208 are Extracellular-facing; sequence AIQRIVNNEHEVDADV. The helical transmembrane segment at 209 to 229 threads the bilayer; that stretch reads MLITAGVGVLFNIVMGLVLHF. Residues 230–258 are Cytoplasmic-facing; the sequence is GTGGHGHTHGGHSSHGHAHDGKNVNVRAA. A helical membrane pass occupies residues 259 to 279; sequence LIHVIGDLVQSIGVLIAALII. Residue Arg-280 is a topological domain, extracellular. A helical transmembrane segment spans residues 281-301; it reads FTGWTLADPICTFLFSIIVLF. Residues 302-410 lie on the Cytoplasmic side of the membrane; the sequence is TTVTVMRDIF…CDTCQQQETA (109 aa).

It belongs to the cation diffusion facilitator (CDF) transporter (TC 2.A.4) family. SLC30A subfamily. As to expression, isoform a: Expressed in the hypodermis and the intestine. Isoform b: Expressed in the intestine, head neurons, seam cells, hypodermis, and the vulva.

Its subcellular location is the cytoplasmic vesicle membrane. It localises to the apical cell membrane. Functionally, promotes excretion of zinc from intestinal cells into the intestinal lumen in response to increased dietary zinc. Involved in cadmium resistance, possibly by promoting its transport from cells. Involved in resistance to B.thuringiensis pore-forming toxin Cry5B downstream of the sek-1 and pmk-1 MAPK kinase pathway. The protein is Zinc transporter ttm-1 of Caenorhabditis elegans.